We begin with the raw amino-acid sequence, 538 residues long: Phosphoenolpyruvate carboxykinase (ATP) (538 aa).

Substrate is bound at residue Arg-64. Ca(2+) contacts are provided by Asn-149 and Phe-151. The substrate site is built by Tyr-206 and Lys-212. ATP contacts are provided by residues Lys-212, His-231, and 247–255; that span reads GLSGTGKTT. The Mn(2+) site is built by Lys-212 and His-231. Asp-268 provides a ligand contact to Mn(2+). ATP-binding positions include Glu-296, Arg-332, 447–448, and Thr-453; that span reads RI. Arg-332 contributes to the substrate binding site.

It belongs to the phosphoenolpyruvate carboxykinase (ATP) family. In terms of assembly, monomer. The cofactor is Mn(2+).

It localises to the cytoplasm. The catalysed reaction is oxaloacetate + ATP = phosphoenolpyruvate + ADP + CO2. Its pathway is carbohydrate biosynthesis; gluconeogenesis. With respect to regulation, allosterically activated by calcium. Involved in the gluconeogenesis. Catalyzes the conversion of oxaloacetate (OAA) to phosphoenolpyruvate (PEP) through direct phosphoryl transfer between the nucleoside triphosphate and OAA. The chain is Phosphoenolpyruvate carboxykinase (ATP) from Salmonella typhimurium (strain LT2 / SGSC1412 / ATCC 700720).